Here is a 192-residue protein sequence, read N- to C-terminus: Neurogenic differentiation factor 1 (192 aa).

The region spanning 19 to 71 (VRRVKANGRERARMHGLNNALDMLREYIPITTQHQKLSKIETLRLARNYIDAL) is the bHLH domain. The disordered stretch occupies residues 116-192 (PSQFDIFSDP…SHQNTFNYSP (77 aa)). Over residues 139–163 (SSFSSSSPSSSCSPPQYYYSPTQPS) the composition is skewed to low complexity.

In terms of tissue distribution, expressed in neuroblasts of the AB lineage. More specifically in precursors of the embryonic ventral cord motor neurons. Expressed to a lesser degree in the EMS lineage which generates mostly endoderm and mesoderm tissues.

It localises to the nucleus. Its function is as follows. Acts as a transcriptional regulator whose activity is required for several aspects of motor neuron fate specification, including cell division patterns, proper spatiotemporal expression of fate-specific markers, and normal axonal morphology and pathfinding. Involved in regulating glial specification. In Caenorhabditis elegans, this protein is Neurogenic differentiation factor 1 (cnd-1).